The primary structure comprises 289 residues: uncharacterized protein (289 aa).

Positions 25-66 are disordered; it reads GGSGDSQSAHTPSTSIHTQNNSTPNKNTSTPPVNVSNANNLE. Positions 33 to 43 are enriched in polar residues; sequence AHTPSTSIHTQ. Low complexity predominate over residues 44-59; sequence NNSTPNKNTSTPPVNV.

This is an uncharacterized protein from Haemophilus influenzae (strain ATCC 51907 / DSM 11121 / KW20 / Rd).